Reading from the N-terminus, the 308-residue chain is Growth/differentiation factor 15 (308 aa).

An N-terminal signal peptide occupies residues 1–29 (MPGQELKTLNGSQMLLVLLVLLWPPHGGA). A propeptide spanning residues 30-192 (VSLAEASRAS…HLRPRASRGR (163 aa)) is cleaved from the precursor. The N-linked (GlcNAc...) asparagine glycan is linked to Asn70. Residues 152 to 179 (APALHLRLSPPPSQSDQLLVKSSSSRPQ) form a disordered region. The segment covering 165–178 (QSDQLLVKSSSSRP) has biased composition (polar residues). Disulfide bonds link Cys203/Cys210, Cys211/Cys274, Cys240/Cys305, and Cys244/Cys307.

Belongs to the TGF-beta family. As to quaternary structure, homodimer; disulfide-linked. Interacts with GFRAL and RET; ligand of GFRAL, which mediates GDF15 internalization and cellular signaling through interaction with RET via the formation of a 2:2:2 ternary complex composed of GDF15, GFRAL and RET. In terms of tissue distribution, detected in plasma (at protein level).

It localises to the secreted. Hormone produced in response to various stresses to confer information about those stresses to the brain, and trigger an aversive response, characterized by nausea and/or loss of appetite. The aversive response is both required to reduce continuing exposure to those stresses at the time of exposure and to promote avoidance behavior in the future. Acts by binding to its receptor, GFRAL, activating GFRAL-expressing neurons localized in the area postrema and nucleus tractus solitarius of the brainstem. It then triggers the activation of neurons localized within the parabrachial nucleus and central amygdala, which constitutes part of the 'emergency circuit' that shapes responses to stressful conditions. The GDF15-GFRAL signal induces expression of genes involved in metabolism, such as lipid metabolism in adipose tissues. Required for avoidance behavior in response to food allergens: induced downstream of mast cell activation to promote aversion and minimize harmful effects of exposure to noxious substances. In addition to suppress appetite, also promotes weight loss by enhancing energy expenditure in muscle: acts by increasing calcium futile cycling in muscle. Contributes to the effect of metformin, an anti-diabetic drug, on appetite reduction and weight loss: produced in the kidney in response to metformin treatment, thereby activating the GDF15-GFRAL response, leading to reduced appetite and weight. Produced in response to anticancer drugs, such as camptothecin or cisplatin, promoting nausea and contributing to malnutrition. Overproduced in many cancers, promoting anorexia in cancer (cachexia). Responsible for the risk of nausea during pregnancy: high levels of GDF15 during pregnancy, mostly originating from embryos, are associated with increased nausea. Maternal sensitivity to nausea is probably determined by pre-pregnancy exposure to GDF15, females with naturally high level of GDF15 being less susceptible to nausea than females with low levels of GDF15 before pregnancy. Promotes metabolic adaptation in response to systemic inflammation caused by bacterial and viral infections in order to promote tissue tolerance and prevent tissue damage. Inhibits growth hormone signaling on hepatocytes. The protein is Growth/differentiation factor 15 of Macaca fascicularis (Crab-eating macaque).